We begin with the raw amino-acid sequence, 462 residues long: Fumarate hydratase class II (462 aa).

Substrate-binding positions include 97 to 99, 127 to 130, 137 to 139, and Thr-185; these read SGT, HPND, and SSN. Residue His-186 is the Proton donor/acceptor of the active site. The active site involves Ser-316. Substrate is bound by residues Ser-317 and 322–324; that span reads KVN.

This sequence belongs to the class-II fumarase/aspartase family. Fumarase subfamily. As to quaternary structure, homotetramer.

The protein resides in the cytoplasm. It carries out the reaction (S)-malate = fumarate + H2O. It participates in carbohydrate metabolism; tricarboxylic acid cycle; (S)-malate from fumarate: step 1/1. Its function is as follows. Involved in the TCA cycle. Catalyzes the stereospecific interconversion of fumarate to L-malate. This chain is Fumarate hydratase class II, found in Halalkalibacterium halodurans (strain ATCC BAA-125 / DSM 18197 / FERM 7344 / JCM 9153 / C-125) (Bacillus halodurans).